A 78-amino-acid polypeptide reads, in one-letter code: Putative permease-like protein YdzE (78 aa).

3 helical membrane-spanning segments follow: residues 2-22, 27-47, and 49-69; these read YLGI…LQLL, GGLF…ILLG, and QIGG…LLVI. Residues 2–70 enclose the EamA domain; the sequence is YLGIVSTACA…ILSGVLLVIK (69 aa).

This sequence belongs to the EamA transporter family.

Its subcellular location is the cell membrane. The sequence is that of Putative permease-like protein YdzE (ydzE) from Bacillus subtilis (strain 168).